The primary structure comprises 220 residues: MTQDELKKAAAIAALDYVENGMIVGVGTGSTVNHFIDGLAGIKGRIAGAVSSSEASARRLQAHGIPVLDLNDITDLPVYVDGADEIDGGFCMIKGGGGALTREKIVAAVARRFICICDASKKVACLGRFPLPVEIIPMARAYVERELVRIGGRPELREGFVTDNGNLIVDVHGLMITSPRALETELNQIVGVVTNGLFARRGADVLLLATLAGVERQVAN.

Substrate is bound by residues 28–31 (TGST), 81–84 (DGAD), and 94–97 (KGGG). Glutamate 103 acts as the Proton acceptor in catalysis. Lysine 121 contributes to the substrate binding site.

It belongs to the ribose 5-phosphate isomerase family. In terms of assembly, homodimer.

It carries out the reaction aldehydo-D-ribose 5-phosphate = D-ribulose 5-phosphate. It functions in the pathway carbohydrate degradation; pentose phosphate pathway; D-ribose 5-phosphate from D-ribulose 5-phosphate (non-oxidative stage): step 1/1. In terms of biological role, catalyzes the reversible conversion of ribose-5-phosphate to ribulose 5-phosphate. The chain is Ribose-5-phosphate isomerase A from Aromatoleum aromaticum (strain DSM 19018 / LMG 30748 / EbN1) (Azoarcus sp. (strain EbN1)).